Here is a 433-residue protein sequence, read N- to C-terminus: Protein translocase subunit SecY (433 aa).

A run of 10 helical transmembrane segments spans residues 17–37 (IVFT…PIPG), 71–91 (IFAL…LMSV), 117–137 (LTVL…ESIV), 141–161 (GPVV…TLVV), 184–204 (LIIF…MFEL), 212–232 (PLIA…IIFF), 268–288 (GVIP…LANF), 310–330 (YILL…AIVF), 366–386 (LTVI…LLMN), and 388–408 (YVIS…VVLD).

Belongs to the SecY/SEC61-alpha family. As to quaternary structure, component of the Sec protein translocase complex. Heterotrimer consisting of SecY, SecE and SecG subunits. The heterotrimers can form oligomers, although 1 heterotrimer is thought to be able to translocate proteins. Interacts with the ribosome. Interacts with SecDF, and other proteins may be involved. Interacts with SecA.

The protein localises to the cell inner membrane. Its function is as follows. The central subunit of the protein translocation channel SecYEG. Consists of two halves formed by TMs 1-5 and 6-10. These two domains form a lateral gate at the front which open onto the bilayer between TMs 2 and 7, and are clamped together by SecE at the back. The channel is closed by both a pore ring composed of hydrophobic SecY resides and a short helix (helix 2A) on the extracellular side of the membrane which forms a plug. The plug probably moves laterally to allow the channel to open. The ring and the pore may move independently. The polypeptide is Protein translocase subunit SecY (Rickettsia felis (strain ATCC VR-1525 / URRWXCal2) (Rickettsia azadi)).